Here is a 169-residue protein sequence, read N- to C-terminus: Peptide deformylase (169 aa).

Fe cation-binding residues include Cys91 and His133. The active site involves Glu134. His137 contacts Fe cation.

Belongs to the polypeptide deformylase family. Fe(2+) is required as a cofactor.

The catalysed reaction is N-terminal N-formyl-L-methionyl-[peptide] + H2O = N-terminal L-methionyl-[peptide] + formate. Its function is as follows. Removes the formyl group from the N-terminal Met of newly synthesized proteins. Requires at least a dipeptide for an efficient rate of reaction. N-terminal L-methionine is a prerequisite for activity but the enzyme has broad specificity at other positions. The chain is Peptide deformylase from Salmonella arizonae (strain ATCC BAA-731 / CDC346-86 / RSK2980).